Reading from the N-terminus, the 230-residue chain is Sugar fermentation stimulation protein homolog (230 aa).

Belongs to the SfsA family.

The polypeptide is Sugar fermentation stimulation protein homolog (Caldivirga maquilingensis (strain ATCC 700844 / DSM 13496 / JCM 10307 / IC-167)).